The chain runs to 332 residues: Ketol-acid reductoisomerase (NADP(+)) 2 (332 aa).

The KARI N-terminal Rossmann domain occupies 2 to 182 (AELFYDADAD…GGTRAGVIRT (181 aa)). Residues 25–28 (YGSQ), Ser-51, Ser-53, and 83–86 (DPIQ) each bind NADP(+). His-108 is an active-site residue. NADP(+) is bound at residue Gly-134. A KARI C-terminal knotted domain is found at 183 to 328 (TFTEETETDL…KELRKLMSWV (146 aa)). Residues Asp-191, Glu-195, Glu-227, and Glu-231 each coordinate Mg(2+). Substrate is bound at residue Ser-252.

It belongs to the ketol-acid reductoisomerase family. Mg(2+) is required as a cofactor.

It catalyses the reaction (2R)-2,3-dihydroxy-3-methylbutanoate + NADP(+) = (2S)-2-acetolactate + NADPH + H(+). The catalysed reaction is (2R,3R)-2,3-dihydroxy-3-methylpentanoate + NADP(+) = (S)-2-ethyl-2-hydroxy-3-oxobutanoate + NADPH + H(+). It participates in amino-acid biosynthesis; L-isoleucine biosynthesis; L-isoleucine from 2-oxobutanoate: step 2/4. Its pathway is amino-acid biosynthesis; L-valine biosynthesis; L-valine from pyruvate: step 2/4. In terms of biological role, involved in the biosynthesis of branched-chain amino acids (BCAA). Catalyzes an alkyl-migration followed by a ketol-acid reduction of (S)-2-acetolactate (S2AL) to yield (R)-2,3-dihydroxy-isovalerate. In the isomerase reaction, S2AL is rearranged via a Mg-dependent methyl migration to produce 3-hydroxy-3-methyl-2-ketobutyrate (HMKB). In the reductase reaction, this 2-ketoacid undergoes a metal-dependent reduction by NADPH to yield (R)-2,3-dihydroxy-isovalerate. In Streptomyces coelicolor (strain ATCC BAA-471 / A3(2) / M145), this protein is Ketol-acid reductoisomerase (NADP(+)) 2.